The primary structure comprises 861 residues: DNA mismatch repair protein MutS (861 aa).

An ATP-binding site is contributed by 613–620; it reads GPNMGGKS.

The protein belongs to the DNA mismatch repair MutS family.

This protein is involved in the repair of mismatches in DNA. It is possible that it carries out the mismatch recognition step. This protein has a weak ATPase activity. This chain is DNA mismatch repair protein MutS, found in Dichelobacter nodosus (strain VCS1703A).